The primary structure comprises 437 residues: GTPase Obg (437 aa).

Residues 2–160 form the Obg domain; it reads SMFLDTAKIS…RQLELELKIL (159 aa). Residues 161-338 form the OBG-type G domain; the sequence is ADVGLVGFPS…LLEATAELLA (178 aa). GTP-binding positions include 167–174, 192–196, 214–217, 284–287, and 319–321; these read GFPSVGKS, FTTIV, DLPG, NKMD, and SSL. Residues Ser-174 and Thr-194 each contribute to the Mg(2+) site. An OCT domain is found at 359-437; that stretch reads GFAETEKDFE…IGKFEFEFVD (79 aa).

It belongs to the TRAFAC class OBG-HflX-like GTPase superfamily. OBG GTPase family. In terms of assembly, monomer. Requires Mg(2+) as cofactor.

It localises to the cytoplasm. An essential GTPase which binds GTP, GDP and possibly (p)ppGpp with moderate affinity, with high nucleotide exchange rates and a fairly low GTP hydrolysis rate. Plays a role in control of the cell cycle, stress response, ribosome biogenesis and in those bacteria that undergo differentiation, in morphogenesis control. The polypeptide is GTPase Obg (Streptococcus pyogenes serotype M1).